The following is a 785-amino-acid chain: Neutral ceramidase (785 aa).

The N-terminal stretch at 1-35 is a signal peptide; that stretch reads MEASSWLCYQARGFGSSRVWLWLLLALVLLNCSLV. N31 carries N-linked (GlcNAc...) asparagine glycosylation. Residue S359 is the Nucleophile of the active site. N-linked (GlcNAc...) asparagine glycosylation is found at N377, N675, and N685.

The protein belongs to the neutral ceramidase family. In terms of tissue distribution, expressed in seedlings, with higher levels in roots than in shoots.

The protein localises to the secreted. The protein resides in the endoplasmic reticulum. It is found in the golgi apparatus. It carries out the reaction an N-acylsphing-4-enine + H2O = sphing-4-enine + a fatty acid. With respect to regulation, enhanced activity in the presence of calcium, magnesium, manganese and zinc ions, but inhibited activity in the presence of iron ion. Its function is as follows. Hydrolyzes the sphingolipid ceramide into sphingosine and free fatty acid. Uses ceramide instead of phytoceramide as substrate. This chain is Neutral ceramidase, found in Oryza sativa subsp. japonica (Rice).